We begin with the raw amino-acid sequence, 217 residues long: Small ribosomal subunit protein uS3 (217 aa).

Residues 40 to 110 (IRDLINKWFN…EVYINIHEVR (71 aa)) enclose the KH type-2 domain.

This sequence belongs to the universal ribosomal protein uS3 family. Part of the 30S ribosomal subunit. Forms a tight complex with proteins S10 and S14.

Functionally, binds the lower part of the 30S subunit head. Binds mRNA in the 70S ribosome, positioning it for translation. In Rickettsia prowazekii (strain Madrid E), this protein is Small ribosomal subunit protein uS3.